The sequence spans 106 residues: UPF0145 protein PP_2873 (106 aa).

The protein belongs to the UPF0145 family.

The protein is UPF0145 protein PP_2873 of Pseudomonas putida (strain ATCC 47054 / DSM 6125 / CFBP 8728 / NCIMB 11950 / KT2440).